A 448-amino-acid chain; its full sequence is MTQQYLTVTALTKYLKRKFDADPYLGRVYLTGEISNFRFRANAHQYFSLKDDHAKISAIMFKSAFQKLKFQPKEGMKVMVVGRISLYENSGSYQIYIEHMEPDGVGALYQALAELREKLGKEGLFEGPKQQLPRYPKRIAVVTSPSGAVIRDIITTVKRRYPIAQLVLFPTLVQGEQAADDIVRNIQRADAQSDFDTMIIGRGGGSIEDLWPFNEEKVARAIHAATTPIISSVGHETDVTIADMVADVRAATPTAAAELAVPVLNEELLRISERRSRLEQSFLYLLQQRTERFQRLQNSYVFKQPERLYEGQTIKLDRMTQRLFQAMTTIHHQKQRQAQGIIAQLQQQTPKGQLRESQQQLAFLQRNLQTQMTQLFLNKQKQFTSAVQQLDLLSPLKIMGRGYSYTTKEDRVVKTVTELQPADQLTIHYADGTVQANVETITAKKEEF.

It belongs to the XseA family. As to quaternary structure, heterooligomer composed of large and small subunits.

Its subcellular location is the cytoplasm. It carries out the reaction Exonucleolytic cleavage in either 5'- to 3'- or 3'- to 5'-direction to yield nucleoside 5'-phosphates.. In terms of biological role, bidirectionally degrades single-stranded DNA into large acid-insoluble oligonucleotides, which are then degraded further into small acid-soluble oligonucleotides. The sequence is that of Exodeoxyribonuclease 7 large subunit from Enterococcus faecalis (strain ATCC 700802 / V583).